Here is a 299-residue protein sequence, read N- to C-terminus: Dye-decolorizing peroxidase YfeX (299 aa).

The active-site Proton acceptor is the Asp143. His215 contacts heme.

This sequence belongs to the DyP-type peroxidase family. The cofactor is heme b.

Its subcellular location is the cytoplasm. Functionally, has both general peroxidase activity and dye-decolorizing activity. Can catalyze the oxidation of both protoporphyrinogen IX and coproporphyrinogen III to their corresponding porphyrins. Also efficiently decolorizes the dyes alizarin red and Cibacron blue F3GA. The protein is Dye-decolorizing peroxidase YfeX (yfeX) of Escherichia coli (strain K12).